The following is a 161-amino-acid chain: Endoribonuclease YbeY (161 aa).

H121, H125, and H131 together coordinate Zn(2+).

The protein belongs to the endoribonuclease YbeY family. Zn(2+) serves as cofactor.

The protein resides in the cytoplasm. Functionally, single strand-specific metallo-endoribonuclease involved in late-stage 70S ribosome quality control and in maturation of the 3' terminus of the 16S rRNA. The sequence is that of Endoribonuclease YbeY from Xylella fastidiosa (strain 9a5c).